Here is a 174-residue protein sequence, read N- to C-terminus: ATP-dependent protease subunit HslV (174 aa).

Residue threonine 2 is part of the active site. Residues glycine 157, cysteine 160, and threonine 163 each coordinate Na(+).

This sequence belongs to the peptidase T1B family. HslV subfamily. In terms of assembly, a double ring-shaped homohexamer of HslV is capped on each side by a ring-shaped HslU homohexamer. The assembly of the HslU/HslV complex is dependent on binding of ATP.

The protein localises to the cytoplasm. It catalyses the reaction ATP-dependent cleavage of peptide bonds with broad specificity.. Its activity is regulated as follows. Allosterically activated by HslU binding. Functionally, protease subunit of a proteasome-like degradation complex believed to be a general protein degrading machinery. The sequence is that of ATP-dependent protease subunit HslV from Shewanella loihica (strain ATCC BAA-1088 / PV-4).